We begin with the raw amino-acid sequence, 466 residues long: Probable ribonuclease FAU-1 (466 aa).

One can recognise an S1 motif domain in the interval 90–152; the sequence is GAIYAGTVTD…TDGRPVLDTT (63 aa).

This sequence belongs to the FAU-1 family.

Its function is as follows. Probable RNase involved in rRNA stability through maturation and/or degradation of precursor rRNAs. Binds to RNA in loop regions with AU-rich sequences. This Haloarcula marismortui (strain ATCC 43049 / DSM 3752 / JCM 8966 / VKM B-1809) (Halobacterium marismortui) protein is Probable ribonuclease FAU-1.